The chain runs to 358 residues: Probable translocation protein Y4yK (358 aa).

Belongs to the FliN/MopA/SpaO family.

Could be involved in the secretion of an unknown factor. The protein is Probable translocation protein Y4yK of Sinorhizobium fredii (strain NBRC 101917 / NGR234).